A 741-amino-acid polypeptide reads, in one-letter code: 1,4-alpha-glucan branching enzyme GlgB 2 (741 aa).

Residues 1–38 (MALRDTSIPEPSGPVPPAPGACATAPPLDPTDRGRLLA) form a disordered region. The active-site Nucleophile is the D421. The active-site Proton donor is E474.

The protein belongs to the glycosyl hydrolase 13 family. GlgB subfamily. In terms of assembly, monomer.

It carries out the reaction Transfers a segment of a (1-&gt;4)-alpha-D-glucan chain to a primary hydroxy group in a similar glucan chain.. The protein operates within glycan biosynthesis; glycogen biosynthesis. In terms of biological role, catalyzes the formation of the alpha-1,6-glucosidic linkages in glycogen by scission of a 1,4-alpha-linked oligosaccharide from growing alpha-1,4-glucan chains and the subsequent attachment of the oligosaccharide to the alpha-1,6 position. The chain is 1,4-alpha-glucan branching enzyme GlgB 2 (glgB2) from Streptomyces coelicolor (strain ATCC BAA-471 / A3(2) / M145).